We begin with the raw amino-acid sequence, 72 residues long: Cell division protein ZapB (72 aa).

The stretch at 1–72 forms a coiled coil; that stretch reads MSSEILDQLE…RSLLGQIDNV (72 aa).

This sequence belongs to the ZapB family. In terms of assembly, homodimer. The ends of the coiled-coil dimer bind to each other, forming polymers. Interacts with FtsZ.

It is found in the cytoplasm. Its function is as follows. Non-essential, abundant cell division factor that is required for proper Z-ring formation. It is recruited early to the divisome by direct interaction with FtsZ, stimulating Z-ring assembly and thereby promoting cell division earlier in the cell cycle. Its recruitment to the Z-ring requires functional FtsA or ZipA. This Actinobacillus succinogenes (strain ATCC 55618 / DSM 22257 / CCUG 43843 / 130Z) protein is Cell division protein ZapB.